The primary structure comprises 112 residues: Putative pterin-4-alpha-carbinolamine dehydratase (112 aa).

The protein belongs to the pterin-4-alpha-carbinolamine dehydratase family.

The enzyme catalyses (4aS,6R)-4a-hydroxy-L-erythro-5,6,7,8-tetrahydrobiopterin = (6R)-L-erythro-6,7-dihydrobiopterin + H2O. The polypeptide is Putative pterin-4-alpha-carbinolamine dehydratase (Shewanella oneidensis (strain ATCC 700550 / JCM 31522 / CIP 106686 / LMG 19005 / NCIMB 14063 / MR-1)).